Here is a 247-residue protein sequence, read N- to C-terminus: ATP synthase subunit a, chloroplastic (247 aa).

Transmembrane regions (helical) follow at residues 38–58 (QVLI…AIAV), 95–115 (VPFI…GALL), 134–154 (INTT…AGLT), 199–219 (LVVV…VMFL), and 220–240 (GLFT…AYIG).

It belongs to the ATPase A chain family. As to quaternary structure, F-type ATPases have 2 components, CF(1) - the catalytic core - and CF(0) - the membrane proton channel. CF(1) has five subunits: alpha(3), beta(3), gamma(1), delta(1), epsilon(1). CF(0) has four main subunits: a, b, b' and c.

It localises to the plastid. It is found in the chloroplast thylakoid membrane. In terms of biological role, key component of the proton channel; it plays a direct role in the translocation of protons across the membrane. This is ATP synthase subunit a, chloroplastic (atpI) from Spinacia oleracea (Spinach).